A 157-amino-acid polypeptide reads, in one-letter code: Putative glutathione-dependent formaldehyde-activating enzyme (157 aa).

The CENP-V/GFA domain occupies 3–134; that stretch reads LEGSCHCGAV…WVEIESREQD (132 aa). Zn(2+) is bound by residues Cys7, Cys9, Cys27, Cys29, Cys32, Cys79, and Cys82.

The protein belongs to the Gfa family. It depends on Zn(2+) as a cofactor.

The catalysed reaction is S-(hydroxymethyl)glutathione = glutathione + formaldehyde. The protein operates within one-carbon metabolism; formaldehyde degradation; formate from formaldehyde (glutathione route): step 1/3. Catalyzes the condensation of formaldehyde and glutathione to S-hydroxymethylglutathione. The sequence is that of Putative glutathione-dependent formaldehyde-activating enzyme from Halomonas elongata (strain ATCC 33173 / DSM 2581 / NBRC 15536 / NCIMB 2198 / 1H9).